The sequence spans 231 residues: MTVLTDKVAVVTGAGSGIGEAIATLLHEEGAKVVLAGRNKEKLQNVANQLSQDSVKVVPTDVTNKEEVDELIKIAQQTFGGLDIVINSAGQMLSSKITDYQVDEWDSMIDVNIKGTLYTAQAALPTMLEQSSGHLINIASISGFEVTKSSTIYSATKAAVHTITQGLEKELAKTGVKVTSISPGMVDTAITAAYNPTDRKKLEPQDIAEAVLYALTQPKHVNVNEITVRPV.

An NADP(+)-binding site is contributed by 10 to 34; that stretch reads VVTGAGSGIGEAIATLLHEEGAKVV. Substrate is bound at residue Ser140. The active-site Proton acceptor is the Tyr153.

It belongs to the short-chain dehydrogenases/reductases (SDR) family.

This is an uncharacterized protein from Staphylococcus aureus (strain COL).